The chain runs to 266 residues: Transcription regulator FGM4 (266 aa).

A disordered region spans residues 17 to 36 (KTQNRLAKRKSRIHAGKQQG). A compositionally biased stretch (basic residues) spans 18 to 31 (TQNRLAKRKSRIHA). 2 ANK repeats span residues 183-212 (KPGSPLHIASAMGHLKVVKTLITYGANVNE) and 216-245 (AGYSPIHYATRNNHTAIVALLLEKGADWSY).

It localises to the nucleus. In terms of biological role, transcription regulator; part of the Fg3_54/C64 gene cluster that mediates the biosynthesis of the octapeptide fusaoctaxin A, a virulence factor that is required for cell-to-cell invasiveness of plant host. Positively regulates the expression the Fg3_54/C64 gene cluster. The chain is Transcription regulator FGM4 from Gibberella zeae (strain ATCC MYA-4620 / CBS 123657 / FGSC 9075 / NRRL 31084 / PH-1) (Wheat head blight fungus).